The primary structure comprises 230 residues: N-(5'-phosphoribosyl)anthranilate isomerase (230 aa).

This sequence belongs to the TrpF family.

It carries out the reaction N-(5-phospho-beta-D-ribosyl)anthranilate = 1-(2-carboxyphenylamino)-1-deoxy-D-ribulose 5-phosphate. It functions in the pathway amino-acid biosynthesis; L-tryptophan biosynthesis; L-tryptophan from chorismate: step 3/5. The chain is N-(5'-phosphoribosyl)anthranilate isomerase from Thermosynechococcus vestitus (strain NIES-2133 / IAM M-273 / BP-1).